A 153-amino-acid chain; its full sequence is Ribonuclease K3 (153 aa).

Residues 1–26 (MGPDLRCFPLLLLLLGLWWSVRPLCA) form the signal peptide. A glycan (N-linked (GlcNAc...) asparagine) is linked at N30. H41 functions as the Proton acceptor in the catalytic mechanism. 4 cysteine pairs are disulfide-bonded: C49-C107, C63-C117, C81-C132, and C88-C95. The N-linked (GlcNAc...) asparagine glycan is linked to N58. Position 64-68 (64-68 (KPQNT)) interacts with substrate. N85 is a glycosylation site (N-linked (GlcNAc...) asparagine). K89 serves as a coordination point for substrate. H148 functions as the Proton donor in the catalytic mechanism.

It belongs to the pancreatic ribonuclease family. Interacts (via N-terminus) with bacterial lipopolysaccharide (LPS). Kidney.

It is found in the secreted. It localises to the lysosome. The protein resides in the cytoplasmic granule. In terms of biological role, ribonuclease which shows a preference for the pyrimidines uridine and cytosine. Has potent antibacterial activity against a range of Gram-positive and Gram-negative bacteria, including P.aeruginosa, A.baumanii, M.luteus, S.aureus, E.faecalis, E.faecium, S.saprophyticus and E.coli. Causes loss of bacterial membrane integrity, and also promotes agglutination of Gram-negative bacteria. Probably contributes to urinary tract sterility. Bactericidal activity is independent of RNase activity. The sequence is that of Ribonuclease K3 (RNASE6) from Sus scrofa (Pig).